A 397-amino-acid polypeptide reads, in one-letter code: ATP-dependent RNA helicase eIF4A (397 aa).

Positions 23–51 (YKFDDLNLKPNIVRGIFGYGYETPSAIQQ) match the Q motif motif. The Helicase ATP-binding domain maps to 54-224 (ILPITEGRDV…TKFMNNPVRI (171 aa)). 67-74 (AQSGTGKT) is a binding site for ATP. Positions 172–175 (DEAD) match the DEAD box motif. Residues 235–396 (GIKQFYINVE…EMPADIGALF (162 aa)) enclose the Helicase C-terminal domain.

The protein belongs to the DEAD box helicase family. eIF4A subfamily. As to quaternary structure, component of the eIF4F complex, which composition varies with external and internal environmental conditions. It is composed of at least eIF4A, eIF4E and eIF4G.

Its subcellular location is the cytoplasm. The catalysed reaction is ATP + H2O = ADP + phosphate + H(+). ATP-dependent RNA helicase which is a subunit of the eIF4F complex involved in cap recognition and is required for mRNA binding to ribosome. In the current model of translation initiation, eIF4A unwinds RNA secondary structures in the 5'-UTR of mRNAs which is necessary to allow efficient binding of the small ribosomal subunit, and subsequent scanning for the initiator codon. The sequence is that of ATP-dependent RNA helicase eIF4A (TIF1) from Scheffersomyces stipitis (strain ATCC 58785 / CBS 6054 / NBRC 10063 / NRRL Y-11545) (Yeast).